The chain runs to 31 residues: Cytochrome b6-f complex subunit 6 (31 aa).

The chain crosses the membrane as a helical span at residues 4–24; sequence IISYFGFLFGALTLALILFIG.

The protein belongs to the PetL family. In terms of assembly, the 4 large subunits of the cytochrome b6-f complex are cytochrome b6, subunit IV (17 kDa polypeptide, PetD), cytochrome f and the Rieske protein, while the 4 small subunits are PetG, PetL, PetM and PetN. The complex functions as a dimer.

It localises to the plastid. Its subcellular location is the chloroplast thylakoid membrane. In terms of biological role, component of the cytochrome b6-f complex, which mediates electron transfer between photosystem II (PSII) and photosystem I (PSI), cyclic electron flow around PSI, and state transitions. PetL is important for photoautotrophic growth as well as for electron transfer efficiency and stability of the cytochrome b6-f complex. This chain is Cytochrome b6-f complex subunit 6, found in Physcomitrium patens (Spreading-leaved earth moss).